A 673-amino-acid chain; its full sequence is Sodium/myo-inositol cotransporter 2 (673 aa).

At 1-27 (MESTTSSPQPPPSDALEAFPQKSMEPA) the chain is on the extracellular side. Residues 28 to 48 (DIVVLVLYFLFVLAVGLWSTV) form a helical membrane-spanning segment. Topologically, residues 49-56 (RTKRDTVK) are cytoplasmic. A helical transmembrane segment spans residues 57-77 (GYFLAGGDMVWWPVGASLFAS). Residue N78 is a topological domain, extracellular. A helical transmembrane segment spans residues 79–99 (VGSGHFIGLAGSGAAVGISVA). Topologically, residues 100–102 (AYE) are cytoplasmic. Residues 103-123 (LNGLFSVLMLAWIFLPIYIAG) traverse the membrane as a helical segment. The Extracellular portion of the chain corresponds to 124-180 (QVTTMPEYLKRRFGGSRIPITLASIYPSTHSLTILQVDMYAGAIFIQQSLHLDLYLA). The chain crosses the membrane as a helical span at residues 181 to 201 (IVGLLAVTALYTVAGGLAAVI). At 202–208 (YTDALQT) the chain is on the cytoplasmic side. The chain crosses the membrane as a helical span at residues 209–229 (VIMLIGAFILMGYSFAAVGGM). Over 230 to 272 (EGLKDQYFLALASNRSENSSCGLPREDAFHIFRDPLTSDLPWP) the chain is Extracellular. The chain crosses the membrane as a helical span at residues 273–293 (GILFGMSIPSLWYWCTDQVIV). The Cytoplasmic portion of the chain corresponds to 294 to 308 (QRSLAAKNLSHAKGG). A helical transmembrane segment spans residues 309 to 329 (SLMAAYLKVLPLFLMVFPGMV). Over 330-375 (SRILFPDQVACAHPDICQRVCSNPSGCSDIAYPKLVLELLPTGLRG) the chain is Extracellular. The helical transmembrane segment at 376–396 (LMMAVMVAALMSSLTSIFNSA) threads the bilayer. Topologically, residues 397-418 (STIFTMDLWHHIRPRASERELM) are cytoplasmic. A helical transmembrane segment spans residues 419–439 (IVGRVFVLALVLVSILWIPVV). At 440 to 446 (QASQGGQ) the chain is on the extracellular side. A helical membrane pass occupies residues 447–467 (LFIYIQSISSYLQPPVAVVFI). At 468-479 (MGCFWKRTNEKG) the chain is on the cytoplasmic side. Residues 480-500 (AFSGLILGLLLGLVRLILDFV) form a helical membrane-spanning segment. The Extracellular portion of the chain corresponds to 501–521 (YVQPRCDQPDDRPAVVKDVHY). The chain crosses the membrane as a helical span at residues 522-542 (LYFSMILSSTTLITVFTVSWF). Over 543–652 (TETPSKEMVS…SLEENPLVKT (110 aa)) the chain is Cytoplasmic. A helical transmembrane segment spans residues 653 to 673 (LLDVNCIVCISCAIFLWGYFA).

Belongs to the sodium:solute symporter (SSF) (TC 2.A.21) family. As to expression, expressed in kidney and small intestine.

The protein localises to the membrane. Its subcellular location is the apical cell membrane. The catalysed reaction is myo-inositol(out) + 2 Na(+)(out) = myo-inositol(in) + 2 Na(+)(in). It catalyses the reaction 1D-chiro-inositol(out) + 2 Na(+)(out) = 1D-chiro-inositol(in) + 2 Na(+)(in). It carries out the reaction D-glucose(out) + 2 Na(+)(out) = D-glucose(in) + 2 Na(+)(in). The enzyme catalyses D-xylose(out) + 2 Na(+)(out) = D-xylose(in) + 2 Na(+)(in). Its activity is regulated as follows. MI transport activity inhibited by D-chiro-inositol (DCI), phlorizin (Pz) and sodium (Na(+)). Insulin increases D-chiro-inositol uptake. Its function is as follows. Involved in the sodium-dependent cotransport of myo-inositol (MI) with a Na(+):MI stoichiometry of 2:1. Exclusively responsible for apical MI transport and absorption in intestine. Can also transport D-chiro-inositol (DCI) but not L-fucose. Exhibits stereospecific cotransport of both D-glucose and D-xylose. May induce apoptosis through the TNF-alpha, PDCD1 pathway. May play a role in the regulation of MI concentration in serum, involving reabsorption in at least the proximal tubule of the kidney. The chain is Sodium/myo-inositol cotransporter 2 from Rattus norvegicus (Rat).